The chain runs to 172 residues: Ribosome maturation factor RimM (172 aa).

The PRC barrel domain occupies 96–168 (EGEFYYHQII…RVDVELMEGL (73 aa)).

It belongs to the RimM family. As to quaternary structure, binds ribosomal protein uS19.

The protein resides in the cytoplasm. Its function is as follows. An accessory protein needed during the final step in the assembly of 30S ribosomal subunit, possibly for assembly of the head region. Essential for efficient processing of 16S rRNA. May be needed both before and after RbfA during the maturation of 16S rRNA. It has affinity for free ribosomal 30S subunits but not for 70S ribosomes. In Streptococcus pyogenes serotype M6 (strain ATCC BAA-946 / MGAS10394), this protein is Ribosome maturation factor RimM.